Reading from the N-terminus, the 513-residue chain is Cyclin-dependent kinase C-2 (513 aa).

One can recognise a Protein kinase domain in the interval 25 to 325 (FEKLEQIGEG…AKDALDAEYF (301 aa)). ATP is bound by residues 31 to 39 (IGEGTYGQV) and Lys54. Thr35 is subject to Phosphothreonine. At Tyr36 the chain carries Phosphotyrosine. Asp164 serves as the catalytic Proton acceptor. At Ser191 the chain carries Phosphoserine. Thr198 carries the phosphothreonine modification. Positions 336-348 (SLPKYEASHEFQT) are enriched in basic and acidic residues. The tract at residues 336-513 (SLPKYEASHE…RNQQQYGNWQ (178 aa)) is disordered. Residues 417–433 (PNRYPQGGNQGGYNPNR) are compositionally biased toward low complexity. 2 stretches are compositionally biased toward gly residues: residues 457-478 (GGGM…GVGG) and 485-494 (GPYGASGPGR). The segment covering 497-513 (NYNQGGSRNQQQYGNWQ) has biased composition (polar residues).

The protein belongs to the protein kinase superfamily. CMGC Ser/Thr protein kinase family. CDC2/CDKX subfamily.

It carries out the reaction L-seryl-[protein] + ATP = O-phospho-L-seryl-[protein] + ADP + H(+). The enzyme catalyses L-threonyl-[protein] + ATP = O-phospho-L-threonyl-[protein] + ADP + H(+). It catalyses the reaction [DNA-directed RNA polymerase] + ATP = phospho-[DNA-directed RNA polymerase] + ADP + H(+). This Oryza sativa subsp. japonica (Rice) protein is Cyclin-dependent kinase C-2 (CDKC-2).